The sequence spans 497 residues: Probable sensor kinase SilS (497 aa).

Residues 1–15 are Cytoplasmic-facing; that stretch reads MHSKPSRLPFSLALR. Residues 16 to 36 form a helical membrane-spanning segment; that stretch reads LTFFISLSTILAFIAFTWFML. Over 37 to 186 the chain is Periplasmic; that stretch reads HSVEKHFAEQ…HLHYLDALKK (150 aa). A helical transmembrane segment spans residues 187–207; that stretch reads NLIAIAVVISLLIVLIIRIAV. Residues 208–261 form the HAMP domain; it reads RQGHLPLRNVSNAIKNITSENLDARLEPTRVPIELEQLVISFNHMIGKIEDVFT. Topologically, residues 208 to 497 are cytoplasmic; it reads RQGHLPLRNV…KMIPDTQCWE (290 aa). The Histidine kinase domain maps to 269-487; it reads DIAHEIRTPI…RFILSVPRLE (219 aa). Histidine 272 is modified (phosphohistidine; by autocatalysis).

The protein localises to the cell inner membrane. The enzyme catalyses ATP + protein L-histidine = ADP + protein N-phospho-L-histidine.. Functionally, component of the sil cation-efflux system that confers resistance to silver. Probable member of a two-component regulatory system SilS/SilR. May activate SilR by phosphorylation. The protein is Probable sensor kinase SilS (silS) of Salmonella typhimurium.